Consider the following 415-residue polypeptide: UDP-N-acetylglucosamine 1-carboxyvinyltransferase (415 aa).

A phosphoenolpyruvate-binding site is contributed by 22–23; that stretch reads KN. R92 contacts UDP-N-acetyl-alpha-D-glucosamine. Residue C116 is the Proton donor of the active site. C116 is modified (2-(S-cysteinyl)pyruvic acid O-phosphothioketal). UDP-N-acetyl-alpha-D-glucosamine is bound by residues 121–125, D304, and V326; that span reads RPIDL.

It belongs to the EPSP synthase family. MurA subfamily.

It is found in the cytoplasm. It carries out the reaction phosphoenolpyruvate + UDP-N-acetyl-alpha-D-glucosamine = UDP-N-acetyl-3-O-(1-carboxyvinyl)-alpha-D-glucosamine + phosphate. The protein operates within cell wall biogenesis; peptidoglycan biosynthesis. Functionally, cell wall formation. Adds enolpyruvyl to UDP-N-acetylglucosamine. The sequence is that of UDP-N-acetylglucosamine 1-carboxyvinyltransferase from Halothermothrix orenii (strain H 168 / OCM 544 / DSM 9562).